Consider the following 505-residue polypeptide: Cytochrome P450 CYP71D313 (505 aa).

The helical transmembrane segment at 1–21 threads the bilayer; that stretch reads MELQFPLFSIFFVTILFFFLF. Cysteine 441 provides a ligand contact to heme. The helical transmembrane segment at 442–462 threads the bilayer; that stretch reads PGIAFGIATIELPLALLLYHF.

The protein belongs to the cytochrome P450 family. Requires heme as cofactor.

The protein resides in the membrane. Functionally, probable heme-thiolate monooxygenase. This chain is Cytochrome P450 CYP71D313, found in Panax ginseng (Korean ginseng).